A 273-amino-acid polypeptide reads, in one-letter code: MHDANIRVAIAGAGGRMGRQLIQAALALEGVQLGAALEREGSSLLGSDAGELAGAGKTGVTVQSSLDAVKDDFDVFIDFTRPEGTLNHLAFCRQHGKGMVIGTTGFDEAGKQAIRDAAADIAIVFAANFSVGVNVMLKLLEKAAKVMGDYTDIEIIEAHHRHKVDAPSGTALAMGEAIAHALDKDLKDCAVYSREGHTGERVPGTIGFATVRAGDIVGEHTAMFADIGERLEITHKASSRMTFANGAVRSALWLSGKESGLFDMRDVLDLNNL.

Residues 12 to 17 (GAGGRM) and Glu38 each bind NAD(+). An NADP(+)-binding site is contributed by Arg39. Residues 102–104 (GTT) and 126–129 (AANF) each bind NAD(+). His159 functions as the Proton donor/acceptor in the catalytic mechanism. (S)-2,3,4,5-tetrahydrodipicolinate is bound at residue His160. Residue Lys163 is the Proton donor of the active site. Residue 169–170 (GT) coordinates (S)-2,3,4,5-tetrahydrodipicolinate.

Belongs to the DapB family. As to quaternary structure, homotetramer.

The protein resides in the cytoplasm. The enzyme catalyses (S)-2,3,4,5-tetrahydrodipicolinate + NAD(+) + H2O = (2S,4S)-4-hydroxy-2,3,4,5-tetrahydrodipicolinate + NADH + H(+). It catalyses the reaction (S)-2,3,4,5-tetrahydrodipicolinate + NADP(+) + H2O = (2S,4S)-4-hydroxy-2,3,4,5-tetrahydrodipicolinate + NADPH + H(+). It functions in the pathway amino-acid biosynthesis; L-lysine biosynthesis via DAP pathway; (S)-tetrahydrodipicolinate from L-aspartate: step 4/4. In terms of biological role, catalyzes the conversion of 4-hydroxy-tetrahydrodipicolinate (HTPA) to tetrahydrodipicolinate. In Escherichia coli (strain K12 / MC4100 / BW2952), this protein is 4-hydroxy-tetrahydrodipicolinate reductase.